The sequence spans 414 residues: Seminal vesicle secretory protein 2 (414 aa).

Residues 1–22 (MKSSVFILSLFLLLERQAAVVG) form the signal peptide. A Pyrrolidone carboxylic acid modification is found at Q23. Tandem repeats lie at residues 108–120 (ESQI…VKSS), 127–139 (GSQL…VKSS), 140–152 (ESQL…VKAS), 153–165 (GSQL…VKAS), 166–178 (GSQL…MKSS), 179–191 (GSQV…MKSS), 192–204 (GSQV…MKAS), 205–217 (ESQI…RKSQ), 224–236 (YGQM…TKSL), 237–249 (ESQA…VKSQ), 257–269 (YGQR…ETQL), 275–287 (DAQL…QKSQ), and 299–311 (SAQL…QKSL). Residues 108 to 311 (ESQIKSFRQV…LKSFGQQKSL (204 aa)) are 13 X 13 AA tandem repeats. 3 disordered regions span residues 170 to 228 (KSYG…GQMK), 240 to 294 (AKSF…SFSQ), and 306 to 369 (GQQK…FGQE). Over residues 240-259 (AKSFGQVKSQSGQMKSSYGQ) the composition is skewed to polar residues. Over residues 277-294 (QLKSYGQQKSQKQSSFSQ) the composition is skewed to low complexity. Polar residues-rich tracts occupy residues 306–321 (GQQK…TQQK) and 342–351 (SVQQKSTQQM). Low complexity predominate over residues 358–369 (SQFGQQRQFGQE).

In terms of processing, the repeating unit appears to be involved in the formation of the copulatory plug via a transglutaminase reaction cross-linking glutamine and lysine residues.

Its function is as follows. The rat seminal vesicle contains six major androgen-dependent secretory proteins referred to as SVS I-VI. The SVS I-III proteins appear to be components of the rat copulatory plug, with the SVS II protein being the major component. In Rattus norvegicus (Rat), this protein is Seminal vesicle secretory protein 2 (Svs2).